Reading from the N-terminus, the 710-residue chain is Probable inactive DNA (cytosine-5)-methyltransferase DRM3 (710 aa).

The interval 1-21 (MADMRRRNGSGGSSNHERNEQ) is disordered. The 41-residue stretch at 52 to 92 (SGSNVKSLLIEMGFCPTLVQKAIDENGQDDFELLLEILTKS) folds into the UBA 1 domain. Over residues 167–184 (ESEDSLDGAEINEEDEDV) the composition is skewed to acidic residues. The segment at 167-192 (ESEDSLDGAEINEEDEDVTPVTARGP) is disordered. The 45-residue stretch at 198–242 (QLFETMDKTLRLLEMGFSNDEISMAIEKIGTKGQISVLAESIVTG) folds into the UBA 2 domain. Residues 282–360 (AQKEDGGGGS…MGDSSSFMET (79 aa)) are disordered. A compositionally biased stretch (basic and acidic residues) spans 339 to 350 (YDDRGKRLRPED). In terms of domain architecture, SAM-dependent MTase DRM-type spans 379 to 710 (QPRLSQSLGP…RVTKRVRDMM (332 aa)).

The protein belongs to the class I-like SAM-binding methyltransferase superfamily. DRM-methyltransferase family. As to quaternary structure, interacts with Pol V.

It is found in the nucleus. In terms of biological role, catalytically inactive DNA methyltransferase that acts as regulatory factor for DRM2-mediated DNA methylation. Required for maintenance of non-CpG DNA methylation. Required for normal establishment and maintenance of RNA-directed DNA methylation (RdDM) and accumulation of specific repeat-associated small interfering RNAs (siRNAs). Required for nucleolus organizer region (NOR) nuclear organization during interphase. Acts downstream of the production of siRNAs. May promote RNA polymerase V (Pol V) transcriptional elongation or assist in the stabilization of Pol V transcripts. This is Probable inactive DNA (cytosine-5)-methyltransferase DRM3 from Arabidopsis thaliana (Mouse-ear cress).